We begin with the raw amino-acid sequence, 104 residues long: Large ribosomal subunit protein uL24 (104 aa).

Belongs to the universal ribosomal protein uL24 family. Part of the 50S ribosomal subunit.

In terms of biological role, one of two assembly initiator proteins, it binds directly to the 5'-end of the 23S rRNA, where it nucleates assembly of the 50S subunit. One of the proteins that surrounds the polypeptide exit tunnel on the outside of the subunit. The protein is Large ribosomal subunit protein uL24 of Photobacterium profundum (strain SS9).